A 382-amino-acid chain; its full sequence is uncharacterized protein (382 aa).

Residues 1–92 form the PE domain; it reads MQFLSVIPEQ…GATAYRNTEF (92 aa). Transmembrane regions (helical) follow at residues 23–43, 155–175, 203–223, 230–250, 261–281, 284–304, 315–335, and 347–367; these read SALS…VSAA, AAVA…NGVV, FIVA…AVVG, TFLT…LAGV, LASG…VQLF, AFLL…IAVV, LVVP…AQFA, and LGAP…QGIG.

Belongs to the mycobacterial PE family.

The protein localises to the cell membrane. This is an uncharacterized protein from Mycobacterium bovis (strain ATCC BAA-935 / AF2122/97).